We begin with the raw amino-acid sequence, 229 residues long: uncharacterized protein (229 aa).

Positions 102-217 (RRRTVRVEPD…REKVRRYVFE (116 aa)) constitute a PilZ domain.

It to A.aeolicus aq_820 and aq_1211.

This is an uncharacterized protein from Aquifex aeolicus (strain VF5).